Here is a 260-residue protein sequence, read N- to C-terminus: NH(3)-dependent NAD(+) synthetase (260 aa).

31-38 (GLSGGLDS) serves as a coordination point for ATP. Mg(2+) is bound at residue Asp-37. Residue Arg-112 participates in deamido-NAD(+) binding. Thr-132 is an ATP binding site. Residue Glu-137 coordinates Mg(2+). Residues Lys-161 and Ser-183 each coordinate ATP.

Belongs to the NAD synthetase family. As to quaternary structure, homodimer.

The catalysed reaction is deamido-NAD(+) + NH4(+) + ATP = AMP + diphosphate + NAD(+) + H(+). It participates in cofactor biosynthesis; NAD(+) biosynthesis; NAD(+) from deamido-NAD(+) (ammonia route): step 1/1. Functionally, catalyzes the ATP-dependent amidation of deamido-NAD to form NAD. Uses ammonia as a nitrogen source. This Helicobacter pylori (strain G27) protein is NH(3)-dependent NAD(+) synthetase.